Reading from the N-terminus, the 355-residue chain is Acidic fibroblast growth factor intracellular-binding protein B (355 aa).

As to quaternary structure, interacts with IER2.

The protein resides in the nucleus. It is found in the endomembrane system. Its function is as follows. Mediates with IER2 FGF-signaling in Kupffer's vesicle ciliogenesis and in the establishment of laterality in the embryo. May be involved in mitogenic function of FGF1. The polypeptide is Acidic fibroblast growth factor intracellular-binding protein B (Danio rerio (Zebrafish)).